A 703-amino-acid polypeptide reads, in one-letter code: Protein STRUBBELIG-RECEPTOR FAMILY 8 (703 aa).

Residues 1–27 (MAIGDRAMFTVLLLFIASISGFSVVRC) form the signal peptide. The Extracellular segment spans residues 28–291 (VTDPSDVQAL…GKGLSGGVVT (264 aa)). LRR repeat units follow at residues 96–120 (LKSL…LPPN), 122–142 (TSLN…ISAM), 143–165 (GSLS…IFAD), 166–190 (HKSL…LSTV), 192–212 (TLSV…VLSG), 213–233 (LPLK…PKEL), and 234–256 (SSIQ…PQPE). N-linked (GlcNAc...) asparagine glycosylation is found at asparagine 120, asparagine 130, asparagine 149, and asparagine 178. Residue asparagine 226 is glycosylated (N-linked (GlcNAc...) asparagine). The tract at residues 247–284 (DNVPASPQPERPGKKETPSGSKKPKIGSEEKSSDSGKG) is disordered. The helical transmembrane segment at 292–312 (GIVFGSLFVAGIIALVLYLCL) threads the bilayer. The Cytoplasmic portion of the chain corresponds to 313–703 (HKKKRKVRGS…PEHEHVDISF (391 aa)). Residues 395–672 (FSQENIIGEG…SEVVQQLVRL (278 aa)) form the Protein kinase domain. Residues 401–409 (IGEGSLGRV) and lysine 423 contribute to the ATP site.

This sequence belongs to the protein kinase superfamily. Ser/Thr protein kinase family. As to expression, expressed in seedlings, roots, stems, leaves, flowers and siliques.

The protein resides in the membrane. This is Protein STRUBBELIG-RECEPTOR FAMILY 8 (SRF8) from Arabidopsis thaliana (Mouse-ear cress).